We begin with the raw amino-acid sequence, 510 residues long: Serine carboxypeptidase 1 (510 aa).

Residues 1 to 25 form the signal peptide; it reads MARRGRRSLASPAVAIALFVFLAYG. A propeptide spanning residues 26–36 is cleaved from the precursor; the sequence is GGGGGGGVCEA. 3 disulfide bridges follow: Cys-98–Cys-399, Cys-262–Cys-274, and Cys-297–Cys-366. The N-linked (GlcNAc...) asparagine glycan is linked to Asn-154. Residue Ser-194 is part of the active site. The N-linked (GlcNAc...) asparagine glycan is linked to Asn-268. A propeptide spans 303–362 (linker peptide); sequence IKKVTPANTKLPKSFQHLGTTTKPLAVRTRMHGRAWPLRAPVRAGRVPSWQEFARGSRPS. N-linked (GlcNAc...) asparagine glycosylation is present at Asn-418. Active-site residues include Asp-434 and His-487. The short motif at 508 to 510 is the Microbody targeting signal element; that stretch reads SKL.

It belongs to the peptidase S10 family.

The catalysed reaction is Release of a C-terminal amino acid with broad specificity.. The sequence is that of Serine carboxypeptidase 1 (CBP1) from Oryza sativa subsp. japonica (Rice).